A 532-amino-acid polypeptide reads, in one-letter code: Purple acid phosphatase 15 (532 aa).

Residues 1 to 19 form the signal peptide; the sequence is MTFLLLLLFCFLSPAISSA. Residue N136 is glycosylated (N-linked (GlcNAc...) asparagine). D194 contacts Fe cation. N200 carries N-linked (GlcNAc...) asparagine glycosylation. Positions 221 and 224 each coordinate Fe cation. Residue D221 participates in Zn(2+) binding. 2 N-linked (GlcNAc...) asparagine glycosylation sites follow: N231 and N264. N277 provides a ligand contact to Zn(2+). Position 277 (N277) interacts with substrate. Residues N286 and N301 are each glycosylated (N-linked (GlcNAc...) asparagine). A Zn(2+)-binding site is contributed by H359. The active-site Proton donor is the H369. H396 serves as a coordination point for Zn(2+). 396–398 is a binding site for substrate; that stretch reads HVH. H398 is a Fe cation binding site. Residue N491 is glycosylated (N-linked (GlcNAc...) asparagine).

This sequence belongs to the metallophosphoesterase superfamily. Purple acid phosphatase family. In terms of assembly, homodimer. Requires Fe cation as cofactor. Zn(2+) serves as cofactor. Expressed in roots, stems, cotyledons, leaves, flowers and siliques.

The protein resides in the secreted. It carries out the reaction 1D-myo-inositol hexakisphosphate + H2O = 1D-myo-inositol 1,2,3,5,6-pentakisphosphate + phosphate. The enzyme catalyses a phosphate monoester + H2O = an alcohol + phosphate. Its function is as follows. Acid phosphatase activity with p-nitrophenyl phosphate (pNPP), D-myoinositol 1-phosphate (Ins(1)P1), phytic acid and Myo-inositol hexakisphosphate. Low or no activity with Glc-6-P and ATP. Confers shoot growth stimulation, enhanced salt and osmotic stress tolerance, and ABA insensitivity. May modulate ascorbic acid (AsA) levels by controlling the input of myoinositol into this branch of AsA biosynthesis. The protein is Purple acid phosphatase 15 (PAP15) of Arabidopsis thaliana (Mouse-ear cress).